The sequence spans 383 residues: Deoxyhypusine synthase-like protein (383 aa).

It belongs to the deoxyhypusine synthase family.

In Nostoc sp. (strain PCC 7120 / SAG 25.82 / UTEX 2576), this protein is Deoxyhypusine synthase-like protein.